Reading from the N-terminus, the 171-residue chain is Transcription factor E (171 aa).

Positions 5-88 (YEDPFIRIAV…RWRSRREEVE (84 aa)) constitute an HTH TFE/IIEalpha-type domain.

Belongs to the TFE family. As to quaternary structure, monomer. Interaction with RNA polymerase subunits RpoF and RpoE is necessary for Tfe stimulatory transcription activity. Able to interact with Tbp and RNA polymerase in the absence of DNA promoter. Interacts both with the preinitiation and elongation complexes.

Functionally, transcription factor that plays a role in the activation of archaeal genes transcribed by RNA polymerase. Facilitates transcription initiation by enhancing TATA-box recognition by TATA-box-binding protein (Tbp), and transcription factor B (Tfb) and RNA polymerase recruitment. Not absolutely required for transcription in vitro, but particularly important in cases where Tbp or Tfb function is not optimal. It dynamically alters the nucleic acid-binding properties of RNA polymerases by stabilizing the initiation complex and destabilizing elongation complexes. Seems to translocate with the RNA polymerase following initiation and acts by binding to the non template strand of the transcription bubble in elongation complexes. The protein is Transcription factor E of Cenarchaeum symbiosum (strain A).